A 161-amino-acid chain; its full sequence is MFLMVTGFMNYSQQTVRAARYIGQSFMITLSHANRLPVTIQYPYEKLITSERFRGRIHFEFDKCIACEVCVRVCPIDLPVVDWKLETNIRKKRLLNYSIDFGICIFCGNCIEYCPTNCLSMTEEYELSAYDRHELNYNQIALGRLPMSVIDDYTIRTIQIK.

4Fe-4S ferredoxin-type domains follow at residues 55-84 (GRIH…VDWK) and 95-124 (LNYS…MTEE). [4Fe-4S] cluster is bound by residues cysteine 64, cysteine 67, cysteine 70, cysteine 74, cysteine 104, cysteine 107, cysteine 110, and cysteine 114.

It belongs to the complex I 23 kDa subunit family. NDH is composed of at least 16 different subunits, 5 of which are encoded in the nucleus. The cofactor is [4Fe-4S] cluster.

The protein resides in the plastid. Its subcellular location is the chloroplast thylakoid membrane. The enzyme catalyses a plastoquinone + NADH + (n+1) H(+)(in) = a plastoquinol + NAD(+) + n H(+)(out). It carries out the reaction a plastoquinone + NADPH + (n+1) H(+)(in) = a plastoquinol + NADP(+) + n H(+)(out). In terms of biological role, NDH shuttles electrons from NAD(P)H:plastoquinone, via FMN and iron-sulfur (Fe-S) centers, to quinones in the photosynthetic chain and possibly in a chloroplast respiratory chain. The immediate electron acceptor for the enzyme in this species is believed to be plastoquinone. Couples the redox reaction to proton translocation, and thus conserves the redox energy in a proton gradient. The protein is NAD(P)H-quinone oxidoreductase subunit I, chloroplastic of Lotus japonicus (Lotus corniculatus var. japonicus).